The chain runs to 120 residues: Aspartate 1-decarboxylase (120 aa).

Residue Ser25 is the Schiff-base intermediate with substrate; via pyruvic acid of the active site. Ser25 is subject to Pyruvic acid (Ser). Thr57 serves as a coordination point for substrate. The active-site Proton donor is Tyr58. 73-75 (GAA) is a binding site for substrate.

It belongs to the PanD family. Heterooctamer of four alpha and four beta subunits. Pyruvate is required as a cofactor. Post-translationally, is synthesized initially as an inactive proenzyme, which is activated by self-cleavage at a specific serine bond to produce a beta-subunit with a hydroxyl group at its C-terminus and an alpha-subunit with a pyruvoyl group at its N-terminus.

It localises to the cytoplasm. The catalysed reaction is L-aspartate + H(+) = beta-alanine + CO2. Its pathway is cofactor biosynthesis; (R)-pantothenate biosynthesis; beta-alanine from L-aspartate: step 1/1. Its function is as follows. Catalyzes the pyruvoyl-dependent decarboxylation of aspartate to produce beta-alanine. In Polynucleobacter asymbioticus (strain DSM 18221 / CIP 109841 / QLW-P1DMWA-1) (Polynucleobacter necessarius subsp. asymbioticus), this protein is Aspartate 1-decarboxylase.